Reading from the N-terminus, the 115-residue chain is Urease subunit beta (115 aa).

The protein belongs to the urease beta subunit family. As to quaternary structure, heterotrimer of UreA (gamma), UreB (beta) and UreC (alpha) subunits. Three heterotrimers associate to form the active enzyme.

The protein localises to the cytoplasm. It catalyses the reaction urea + 2 H2O + H(+) = hydrogencarbonate + 2 NH4(+). The protein operates within nitrogen metabolism; urea degradation; CO(2) and NH(3) from urea (urease route): step 1/1. The polypeptide is Urease subunit beta (Arthrobacter sp. (strain FB24)).